The following is a 423-amino-acid chain: F-box/LRR-repeat protein 2 (423 aa).

An F-box domain is found at 9-55 (GLINKKLPKELLLRIFSFLDIVTLCRCAQISKAWNILALDGSNWQRI). LRR repeat units lie at residues 61-87 (QTDVEGRVVENISKRCGGFLRKLSLRG), 88-113 (CIGVGDSSLKTFAQNCRNIEHLNLNG), 114-139 (CTKITDSTCYSLSRFCSKLKHLDLTS), 140-165 (CVSITNSSLKGISEGCRNLEYLNLSW), 166-191 (CDQITKDGIEALVRGCRGLKALLLRG), 192-217 (CTQLEDEALKHIQNYCHELVSLNLQS), 218-243 (CSRITDEGVVQICRGCHRLQALCLSG), 244-269 (CSNLTDASLTALGLNCPRLQILEAAR), 270-295 (CSHLTDAGFTLLARNCHELEKMDLEE), 296-321 (CILITDSTLIQLSIHCPKLQALSLSH), 322-350 (CELITDDGILHLSNSTCGHERLRVLELDN), 351-375 (CLLITDVALEHLENCRGLERLELYD), and 376-401 (CQQVTRAGIKRMRAQLPHVKVHAYFA). Residues 80 to 90 (LRKLSLRGCIG) are interaction with Calmodulin. Lysine 201 participates in a covalent cross-link: Glycyl lysine isopeptide (Lys-Gly) (interchain with G-Cter in ubiquitin). Threonine 404 carries the phosphothreonine modification. Cysteine 420 carries the S-geranylgeranyl cysteine lipid modification. Positions 420–423 (CVIL) match the CAAX motif motif.

In terms of assembly, part of the SCF (SKP1-CUL1-F-box) E3 ubiquitin-protein ligase complex SCF(FBXL2) composed of CUL1, SKP1, RBX1 and FBXL2. Interacts with calmodulin; may antagonize substrate ubiquitination by SCF(FBXL2). May interact with PIK3R1. Interacts with PTPN13. (Microbial infection) Interacts with hepatitis C virus non-structural protein 5A (NS5A) and less efficiently, with hepatitis C virus non-structural protein 5B (NS5B); a reaction crucial for hepatitis C virus RNA replication. Post-translationally, phosphorylated by GSK-beta (GSK3B), promoting recognition by FBXO3, leading to its ubiquitination by the SCF(FBXO3) complex. In terms of processing, ubiquitinated at Lys-201 by the SCF(FBXO3) complex in response to lipopolysaccharide (LPS), leading to its degradation by the proteasome. As to expression, expressed in brain, heart, kidney, liver, lung, pancreas and placenta.

Its subcellular location is the membrane. The protein operates within protein modification; protein ubiquitination. Functionally, calcium-activated substrate recognition component of the SCF (SKP1-cullin-F-box protein) E3 ubiquitin-protein ligase complex, SCF(FBXL2), which mediates the ubiquitination and subsequent proteasomal degradation of target proteins. Unlike many F-box proteins, FBXL2 does not seem to target phosphodegron within its substrates but rather calmodulin-binding motifs and is thereby antagonized by calmodulin. This is the case for the cyclins CCND2 and CCND3 which polyubiquitination and subsequent degradation are inhibited by calmodulin. Through CCND2 and CCND3 degradation induces cell-cycle arrest in G(0). SCF(FBXL2) also mediates PIK3R2 ubiquitination and proteasomal degradation thereby regulating phosphatidylinositol 3-kinase signaling and autophagy. PCYT1A monoubiquitination by SCF(FBXL2) and subsequent degradation regulates synthesis of phosphatidylcholine, which is utilized for formation of membranes and of pulmonary surfactant. The SCF(FBXL2) complex acts as a regulator of inflammation by mediating ubiquitination and degradation of TRAF proteins (TRAF1, TRAF2, TRAF3, TRAF4, TRAF5 and TRAF6). The SCF(FBXL2) complex acts as a negative regulator of the NLRP3 inflammasome by mediating ubiquitination and degradation of NLRP3. The chain is F-box/LRR-repeat protein 2 from Homo sapiens (Human).